Here is a 279-residue protein sequence, read N- to C-terminus: Putative polysaccharide deacetylase YxkH (279 aa).

The N-terminal stretch at 1–19 (MKRLFLSIFLLGSCLALAA) is a signal peptide. Residue C20 is the site of N-palmitoyl cysteine attachment. C20 carries the S-diacylglycerol cysteine lipid modification. The disordered stretch occupies residues 29–51 (QPMPKAEQKKPEKKAVQVQKKED). Residues 34–51 (AEQKKPEKKAVQVQKKED) show a composition bias toward basic and acidic residues. Positions 119-279 (KCVLITFDDG…AFGAYIESMK (161 aa)) constitute a NodB homology domain.

It belongs to the polysaccharide deacetylase family.

The protein resides in the cell membrane. The protein is Putative polysaccharide deacetylase YxkH (yxkH) of Bacillus subtilis (strain 168).